A 237-amino-acid polypeptide reads, in one-letter code: Periplasmic deoxyribonuclease (237 aa).

A signal peptide spans 1–27 (MSRPSRVLGLPLLSLGLTLLVSTPLQA).

Belongs to the EndA/NucM nuclease family.

It is found in the periplasm. In terms of biological role, endonuclease which is capable of degrading plasmid DNA. The sequence is that of Periplasmic deoxyribonuclease (dnsH) from Aeromonas hydrophila.